We begin with the raw amino-acid sequence, 478 residues long: PRAME family member 26 (478 aa).

One copy of the LRR 1; degenerate repeat lies at 99–126; sequence RWKLQVLDLQDVCENFWMVWSEAMARGC. Residues 181 to 205 form an LRR 2; degenerate repeat; it reads HLCCKKLKILGMPFRNIRSILKMVN. Residues 206–232 form an LRR 3; degenerate repeat; that stretch reads LDCIQEVEVNCKWVLPILTQFTPYLGH. An LRR 4; degenerate repeat occupies 233-268; sequence MRNLQKLVLSHMDVSRYVSPEQKKEIVTQFTTQFLK. LRR repeat units follow at residues 269–294, 295–326, 327–347, 351–378, and 379–403; these read LHCL…LSCL, KTSL…SQLK, TLDL…QILL, AATL…ALSR, and CFEL…LLSH.

It belongs to the PRAME family.

This chain is PRAME family member 26, found in Homo sapiens (Human).